We begin with the raw amino-acid sequence, 274 residues long: Kit ligand (274 aa).

Residues 1–25 (MKKTQTWIITCIYLQLLLFNPLVKT) form the signal peptide. At 26–215 (KGICGKRVTD…SNSIGDSNLQ (190 aa)) the chain is on the extracellular side. 2 disulfides stabilise this stretch: Cys29–Cys114 and Cys68–Cys164. 4 N-linked (GlcNAc...) asparagine glycosylation sites follow: Asn90, Asn97, Asn145, and Asn196. Residues 216 to 238 (WAAMALPAFFSLVIGFAFGALYW) traverse the membrane as a helical segment. The Cytoplasmic segment spans residues 239–274 (KKKQPNLTRTVENIQINEEDNEISMLQEKEREFQEV).

It belongs to the SCF family. Homodimer, non-covalently linked. A soluble form is produced by proteolytic processing of the extracellular domain.

The protein localises to the cytoplasm. It is found in the cytoskeleton. Its subcellular location is the cell membrane. It localises to the cell projection. The protein resides in the lamellipodium. The protein localises to the filopodium. It is found in the secreted. Its function is as follows. Stimulates the proliferation of mast cells. Able to augment the proliferation of both myeloid and lymphoid hematopoietic progenitors in bone marrow culture. Also mediates cell-cell adhesion. Acts synergistically with other cytokines, probably interleukins. The chain is Kit ligand (KITLG) from Canis lupus familiaris (Dog).